Reading from the N-terminus, the 598-residue chain is Glutamine--fructose-6-phosphate aminotransferase [isomerizing] (598 aa).

Cys-2 (nucleophile; for GATase activity) is an active-site residue. Residues 2 to 219 form the Glutamine amidotransferase type-2 domain; it reads CGIIGYIGPR…DGEYGIVSKD (218 aa). SIS domains follow at residues 280–420 and 449–588; these read VAEL…LVGI and IAVK…PDRP. Catalysis depends on Lys-593, which acts as the For Fru-6P isomerization activity.

In terms of assembly, homodimer.

It is found in the cytoplasm. It carries out the reaction D-fructose 6-phosphate + L-glutamine = D-glucosamine 6-phosphate + L-glutamate. In terms of biological role, catalyzes the first step in hexosamine metabolism, converting fructose-6P into glucosamine-6P using glutamine as a nitrogen source. In Pyrococcus horikoshii (strain ATCC 700860 / DSM 12428 / JCM 9974 / NBRC 100139 / OT-3), this protein is Glutamine--fructose-6-phosphate aminotransferase [isomerizing].